The chain runs to 447 residues: MRYLPLTPEDRTEMLARVGVPSVDALFEDIPAAKRLVELPDLPLHKGELEVERWLGRLSAKNLAASAAPFFVGAGAYKHHVPASVDHLIQRSEFMTSYTPYQPEIAQGTLQYVFEFQTQVAALTGMEVANASMYDGSTATGEAVLMAHRLTKRGKAILSGGLHPHYAQVVTSQAALTGHDVVVMPPDLQAKEDLVGRLDAQTSCLVVQSPDVFGNLRDLEPLAEACRKQGVLLIAVFTEAVSLGLVKAPGDMGADIVVGEGQSIGNALNFGGPYVGLFATRSKYLRQMPGRLCGETLDADGRRGFVLTLSTREQHIRRDKATSNICTNSGLCCLAFTIHLTLLGEQGLRQLATINHAHAVDLADRLAKVPGVELLNETFFNEFTIRLPGRAEDHVEALAAQGILAGVPVSRLLPGQGCDDLLIIASTEVNSDDDRAALVDALAKQIA.

Belongs to the GcvP family. N-terminal subunit subfamily. As to quaternary structure, the glycine cleavage system is composed of four proteins: P, T, L and H. In this organism, the P 'protein' is a heterodimer of two subunits.

It catalyses the reaction N(6)-[(R)-lipoyl]-L-lysyl-[glycine-cleavage complex H protein] + glycine + H(+) = N(6)-[(R)-S(8)-aminomethyldihydrolipoyl]-L-lysyl-[glycine-cleavage complex H protein] + CO2. In terms of biological role, the glycine cleavage system catalyzes the degradation of glycine. The P protein binds the alpha-amino group of glycine through its pyridoxal phosphate cofactor; CO(2) is released and the remaining methylamine moiety is then transferred to the lipoamide cofactor of the H protein. This chain is Probable glycine dehydrogenase (decarboxylating) subunit 1, found in Beijerinckia indica subsp. indica (strain ATCC 9039 / DSM 1715 / NCIMB 8712).